Reading from the N-terminus, the 399-residue chain is Organelle RRM domain-containing protein 1, chloroplastic (399 aa).

The transit peptide at 1-52 (MDAARASLLLAGGLAVSTSTSAVATAAQTVSIPHLSPHTRRRRQRRFLRLAS) directs the protein to the chloroplast. Positions 295 to 373 (KRLFVTGLSF…WMIVVDVAKH (79 aa)) constitute an RRM domain. Residues 377–399 (DRQPPYSASGRSNQVLRSRYHTG) are disordered.

It localises to the plastid. The protein localises to the chloroplast. Involved in C-to-U editing of chloroplastic RNA. Functions as major chloroplastic editing factor. Controls a majority of the chloroplastic editing sites. The sequence is that of Organelle RRM domain-containing protein 1, chloroplastic from Oryza sativa subsp. japonica (Rice).